A 295-amino-acid polypeptide reads, in one-letter code: Ethanolamine ammonia-lyase small subunit (295 aa).

Adenosylcob(III)alamin-binding residues include V207, E228, and C258.

The protein belongs to the EutC family. In terms of assembly, the basic unit is a heterodimer which dimerizes to form tetramers. The heterotetramers trimerize; 6 large subunits form a core ring with 6 small subunits projecting outwards. Adenosylcob(III)alamin serves as cofactor.

It is found in the bacterial microcompartment. It carries out the reaction ethanolamine = acetaldehyde + NH4(+). Its pathway is amine and polyamine degradation; ethanolamine degradation. In terms of biological role, catalyzes the deamination of various vicinal amino-alcohols to oxo compounds. Allows this organism to utilize ethanolamine as the sole source of nitrogen and carbon in the presence of external vitamin B12. The chain is Ethanolamine ammonia-lyase small subunit from Escherichia fergusonii (strain ATCC 35469 / DSM 13698 / CCUG 18766 / IAM 14443 / JCM 21226 / LMG 7866 / NBRC 102419 / NCTC 12128 / CDC 0568-73).